Reading from the N-terminus, the 124-residue chain is Fluoride-specific ion channel FluC (124 aa).

4 helical membrane-spanning segments follow: residues 4–24, 35–55, 62–82, and 95–115; these read LLFVALGGSIGAVLRYLMSII, FGTLLVNVLGSFFMGIVYALG, PELKALVGVGLLGALTTFSTF, and WFKSLINVLLNVSLCIFMVYL. The Na(+) site is built by G74 and T77.

This sequence belongs to the fluoride channel Fluc/FEX (TC 1.A.43) family.

Its subcellular location is the cell inner membrane. It carries out the reaction fluoride(in) = fluoride(out). Na(+) is not transported, but it plays an essential structural role and its presence is essential for fluoride channel function. In terms of biological role, fluoride-specific ion channel. Important for reducing fluoride concentration in the cell, thus reducing its toxicity. The sequence is that of Fluoride-specific ion channel FluC from Shewanella denitrificans (strain OS217 / ATCC BAA-1090 / DSM 15013).